The chain runs to 293 residues: MAAITASMVAELRAKTDAPMMECKKALTEADGDLAKAEELLRVKLGNKASKAASRVTAEGVVASFVGGNAGALVELNCETDFVAKNDDFLAFSKTVAELVATQNPADVAALSALPLEGSTVDAVRLALIGKIGENVSIRRFVRFETANKIATYLHGARIGVIVEYTGADEQVGKDVAMHIAAMKPVALSSADVPAELIDTERRVAEQKAAESGKPAEIVAKMVDGSVQKYLKEVSLLNQTFVKNDKQTIEQMLKAANSTVQKFALFVVGEGIEKRQDDFAAEVAAQVAAAKQQ.

An involved in Mg(2+) ion dislocation from EF-Tu region spans residues 80 to 83 (TDFV).

It belongs to the EF-Ts family.

Its subcellular location is the cytoplasm. Its function is as follows. Associates with the EF-Tu.GDP complex and induces the exchange of GDP to GTP. It remains bound to the aminoacyl-tRNA.EF-Tu.GTP complex up to the GTP hydrolysis stage on the ribosome. The polypeptide is Elongation factor Ts (Burkholderia ambifaria (strain MC40-6)).